The chain runs to 499 residues: Glycerol kinase (499 aa).

Thr-12 is an ADP binding site. Residues Thr-12, Thr-13, and Ser-14 each contribute to the ATP site. Thr-12 is a sn-glycerol 3-phosphate binding site. Position 16 (Arg-16) interacts with ADP. The sn-glycerol 3-phosphate site is built by Arg-82, Glu-83, Tyr-135, and Asp-245. The glycerol site is built by Arg-82, Glu-83, Tyr-135, Asp-245, and Gln-246. Residues Thr-267 and Gly-310 each contribute to the ADP site. Thr-267, Gly-310, Gln-314, and Gly-411 together coordinate ATP. ADP is bound by residues Gly-411 and Asn-415.

This sequence belongs to the FGGY kinase family. As to quaternary structure, homotetramer and homodimer (in equilibrium).

The enzyme catalyses glycerol + ATP = sn-glycerol 3-phosphate + ADP + H(+). It functions in the pathway polyol metabolism; glycerol degradation via glycerol kinase pathway; sn-glycerol 3-phosphate from glycerol: step 1/1. With respect to regulation, activated by phosphorylation and inhibited by fructose 1,6-bisphosphate (FBP). Functionally, key enzyme in the regulation of glycerol uptake and metabolism. Catalyzes the phosphorylation of glycerol to yield sn-glycerol 3-phosphate. This is Glycerol kinase from Clostridium beijerinckii (strain ATCC 51743 / NCIMB 8052) (Clostridium acetobutylicum).